Consider the following 102-residue polypeptide: Biotrophy-associated secreted protein 4 (102 aa).

An N-terminal signal peptide occupies residues Met-1–Ala-21. Residue Asn-36 is glycosylated (N-linked (GlcNAc...) asparagine).

Its subcellular location is the secreted. Its function is as follows. Secreted effector involved in biotrophic colonization of plant cells. Participates in transition from the biotrophic to the necrotrophic phase of Magnaporthe oryzae. Elicits rice basic defense responses during the early stage of interaction and promotes cell death in the late stage of compatible interaction. The protein is Biotrophy-associated secreted protein 4 of Pyricularia oryzae (strain 70-15 / ATCC MYA-4617 / FGSC 8958) (Rice blast fungus).